A 128-amino-acid chain; its full sequence is NHP2-like protein 1 (128 aa).

The tract at residues 36-48 (RKGANEATKTLNR) is interaction with U4 snRNA and U4atac snRNA. The important for U4 snRNA-binding stretch occupies residues 96–128 (SRPVIACAVTIKEGSQLKPQIQSLQQSIERLLV).

It belongs to the eukaryotic ribosomal protein eL8 family. Identified in the spliceosome B complex. Component of the U4/U6-U5 tri-snRNP complex. Part of the small subunit (SSU) processome, composed of more than 70 proteins and the RNA chaperone small nucleolar RNA (snoRNA) U3.

It is found in the nucleus. The protein resides in the nucleolus. In terms of biological role, part of the small subunit (SSU) processome, first precursor of the small eukaryotic ribosomal subunit. During the assembly of the SSU processome in the nucleolus, many ribosome biogenesis factors, an RNA chaperone and ribosomal proteins associate with the nascent pre-rRNA and work in concert to generate RNA folding, modifications, rearrangements and cleavage as well as targeted degradation of pre-ribosomal RNA by the RNA exosome. Involved in pre-mRNA splicing as component of the spliceosome. Binds to the 5'-stem-loop of U4 snRNA and thereby contributes to spliceosome assembly. The protein undergoes a conformational change upon RNA-binding. Core component of box C/D small nucleolar ribonucleoprotein (snoRNP) complexes that function in methylation of multiple sites on ribosomal RNAs (rRNAs) and messenger RNAs (mRNAs). This chain is NHP2-like protein 1, found in Xenopus tropicalis (Western clawed frog).